We begin with the raw amino-acid sequence, 327 residues long: Phenylalanine--tRNA ligase alpha subunit (327 aa).

Residue Glu-252 participates in Mg(2+) binding.

The protein belongs to the class-II aminoacyl-tRNA synthetase family. Phe-tRNA synthetase alpha subunit type 1 subfamily. As to quaternary structure, tetramer of two alpha and two beta subunits. It depends on Mg(2+) as a cofactor.

The protein resides in the cytoplasm. It catalyses the reaction tRNA(Phe) + L-phenylalanine + ATP = L-phenylalanyl-tRNA(Phe) + AMP + diphosphate + H(+). This is Phenylalanine--tRNA ligase alpha subunit from Salmonella agona (strain SL483).